The following is a 295-amino-acid chain: Phosphatidylserine decarboxylase proenzyme (295 aa).

Active-site charge relay system; for autoendoproteolytic cleavage activity residues include D113, H169, and S256. S256 acts as the Schiff-base intermediate with substrate; via pyruvic acid; for decarboxylase activity in catalysis. The residue at position 256 (S256) is a Pyruvic acid (Ser); by autocatalysis.

Belongs to the phosphatidylserine decarboxylase family. PSD-B subfamily. Prokaryotic type II sub-subfamily. As to quaternary structure, heterodimer of a large membrane-associated beta subunit and a small pyruvoyl-containing alpha subunit. Requires pyruvate as cofactor. In terms of processing, is synthesized initially as an inactive proenzyme. Formation of the active enzyme involves a self-maturation process in which the active site pyruvoyl group is generated from an internal serine residue via an autocatalytic post-translational modification. Two non-identical subunits are generated from the proenzyme in this reaction, and the pyruvate is formed at the N-terminus of the alpha chain, which is derived from the carboxyl end of the proenzyme. The autoendoproteolytic cleavage occurs by a canonical serine protease mechanism, in which the side chain hydroxyl group of the serine supplies its oxygen atom to form the C-terminus of the beta chain, while the remainder of the serine residue undergoes an oxidative deamination to produce ammonia and the pyruvoyl prosthetic group on the alpha chain. During this reaction, the Ser that is part of the protease active site of the proenzyme becomes the pyruvoyl prosthetic group, which constitutes an essential element of the active site of the mature decarboxylase.

It localises to the cell membrane. The catalysed reaction is a 1,2-diacyl-sn-glycero-3-phospho-L-serine + H(+) = a 1,2-diacyl-sn-glycero-3-phosphoethanolamine + CO2. Its pathway is phospholipid metabolism; phosphatidylethanolamine biosynthesis; phosphatidylethanolamine from CDP-diacylglycerol: step 2/2. In terms of biological role, catalyzes the formation of phosphatidylethanolamine (PtdEtn) from phosphatidylserine (PtdSer). This Clostridium botulinum (strain ATCC 19397 / Type A) protein is Phosphatidylserine decarboxylase proenzyme.